We begin with the raw amino-acid sequence, 291 residues long: Stem 31 kDa glycoprotein (291 aa).

N-linked (GlcNAc...) asparagine glycosylation occurs at Asn-126.

In terms of tissue distribution, accumulates in the stems of developing soybean seedlings.

Functionally, may function as somatic storage protein during early seedling development. This is Stem 31 kDa glycoprotein (VSP25) from Glycine max (Soybean).